Consider the following 166-residue polypeptide: SsrA-binding protein (166 aa).

The tract at residues 146–166 (KRAAEKEKQSKKDVKAAMERY) is disordered.

This sequence belongs to the SmpB family.

Its subcellular location is the cytoplasm. Its function is as follows. Required for rescue of stalled ribosomes mediated by trans-translation. Binds to transfer-messenger RNA (tmRNA), required for stable association of tmRNA with ribosomes. tmRNA and SmpB together mimic tRNA shape, replacing the anticodon stem-loop with SmpB. tmRNA is encoded by the ssrA gene; the 2 termini fold to resemble tRNA(Ala) and it encodes a 'tag peptide', a short internal open reading frame. During trans-translation Ala-aminoacylated tmRNA acts like a tRNA, entering the A-site of stalled ribosomes, displacing the stalled mRNA. The ribosome then switches to translate the ORF on the tmRNA; the nascent peptide is terminated with the 'tag peptide' encoded by the tmRNA and targeted for degradation. The ribosome is freed to recommence translation, which seems to be the essential function of trans-translation. The sequence is that of SsrA-binding protein from Synechococcus sp. (strain CC9605).